The sequence spans 489 residues: MKEIAVTIDDKNVIASVSESFHGVAFDASLFSPKGLWSFVDITSPKLFKLLEGLSPGYFRVGGTFANWLFFDLDENNKWKDYWAFKDKTPETATITRRWLFRKQNNLKKETFDDLVKLTKGSKMRLLFDLNAEVRTGYEIGKKMTSTWDSSEAEKLFKYCVSKGYGDNIDWELGNEPDHTSAHNLTEKQVGEDFKALHKVLEKYPTLNKGSLVGPDVGWMGVSYVKGLADGAGDHVTAFTLHQYYFDGNTSDVSTYLDATYFKKLQQLFDKVKDVLKNSPHKDKPLWLGETSSGYNSGTKDVSDRYVSGFLTLDKLGLSAANNVKVVIRQTIYNGYYGLLDKNTLEPNPDYWLMHVHNSLVGNTVFKVDVSDPTNKARVYAQCTKTNSKHTQSRYYKGSLTIFALNVGDEDVTLKIDQYSGKKIYSYILTPEGGQLTSQKVLLNGKELKLVSDQLPELNADESKTSFTLSPKTFGFFVVSDANVEACKK.

Glu176 acts as the Proton donor in catalysis. Glu290 acts as the Nucleophile in catalysis.

The protein belongs to the glycosyl hydrolase 79 family.

It catalyses the reaction Random hydrolysis of (1-&gt;3)-linkages between beta-D-glucuronate and N-acetyl-D-glucosamine residues in hyaluronate.. With respect to regulation, hyaluronidase activity is inhibited by Mn(2+), Cu(2+) and Fe(3+). Hyaluronidase that mediates hydrolysis of (1-&gt;3)-linkages between beta-D-glucuronate and N-acetyl-D-glucosamine residues in hyaluronate. Very specific to hyaluronate: not able to hydrolyze chitin, heparin or chondroitin sulfate. The chain is Hyaluronoglucuronidase from Hirudo nipponia (Korean blood-sucking leech).